We begin with the raw amino-acid sequence, 229 residues long: Transcriptional activator protein YukR (229 aa).

Residues 157 to 222 (DTSGKGILSP…QAIRLGVELE (66 aa)) enclose the HTH luxR-type domain. The H-T-H motif DNA-binding region spans 181–200 (YPEIALIAGITTRTVKHHMG).

The protein belongs to the autoinducer-regulated transcriptional regulatory protein family.

Probable transcriptional activator. Binds to an autoinducer molecule. The chain is Transcriptional activator protein YukR (yukR) from Yersinia ruckeri.